The chain runs to 610 residues: Dopamine beta-hydroxylase (610 aa).

The Cytoplasmic segment spans residues 1–9 (MQVPSPSVR). Residues 10 to 30 (EAASMYGTAVAVFLVILVAAL) form a helical; Signal-anchor for type II membrane protein membrane-spanning segment. The Intragranular segment spans residues 31-610 (QGSAPAESPF…TVLNISGGKG (580 aa)). Residues 50–166 (GTLELSWNIS…GTVHLVYGFL (117 aa)) enclose the DOMON domain. Disulfide bonds link C147–C589, C225–C276, C262–C288, C383–C496, C387–C558, and C459–C481. N177 is a glycosylation site (N-linked (GlcNAc...) asparagine). Residue Y223 is part of the active site. Cu(2+) contacts are provided by H255 and H256. Cu(2+)-binding residues include H326, H405, H407, and M480. H405 is an active-site residue. N-linked (GlcNAc...) asparagine glycosylation is present at N559. Positions 585–610 (PTPHCPASQAQSPAGPTVLNISGGKG) are disordered.

The protein belongs to the copper type II ascorbate-dependent monooxygenase family. Homotetramer; composed of two disulfide-linked dimers. Cu(2+) serves as cofactor. Proteolytic cleavage after the membrane-anchor leads to the release of the soluble form. Post-translationally, N-glycosylated. In terms of tissue distribution, detected in chromaffin granules in the adrenal medulla (at protein level). Detected in adrenal medulla.

The protein resides in the cytoplasmic vesicle. Its subcellular location is the secretory vesicle lumen. The protein localises to the secretory vesicle. It is found in the chromaffin granule lumen. It localises to the secretory vesicle membrane. The protein resides in the chromaffin granule membrane. The catalysed reaction is dopamine + 2 L-ascorbate + O2 = (R)-noradrenaline + 2 monodehydro-L-ascorbate radical + H2O. It functions in the pathway catecholamine biosynthesis; (R)-noradrenaline biosynthesis; (R)-noradrenaline from dopamine: step 1/1. Functionally, catalyzes the hydroxylation of dopamine to noradrenaline (also known as norepinephrine), and is thus vital for regulation of these neurotransmitters. The polypeptide is Dopamine beta-hydroxylase (DBH) (Bos taurus (Bovine)).